Consider the following 482-residue polypeptide: ADP-ribosylation factor GTPase-activating protein effector protein 1 (482 aa).

The disordered stretch occupies residues 116–156; it reads QHKSTHSHHINHQTHPIHSSSSNSNSNNRIPTKTDSSKQHT. Basic residues predominate over residues 118–127; the sequence is KSTHSHHINH. The segment covering 134-143 has biased composition (low complexity); sequence SSSSNSNSNN. An Arf-GAP domain is found at 170 to 297; the sequence is DELLSIVRKI…FVIDSNQGRE (128 aa). The C4-type zinc-finger motif lies at 186–210; the sequence is CCDCGSTATVEWVSINLLCILCIKC.

The protein resides in the cytoplasm. Its function is as follows. GTPase-activating protein (GAP) for the ADP ribosylation factors ARF1 and ARF2. May be involved in the endocytic pathway. This Saccharomyces cerevisiae (strain ATCC 204508 / S288c) (Baker's yeast) protein is ADP-ribosylation factor GTPase-activating protein effector protein 1 (AGE1).